Consider the following 87-residue polypeptide: UPF0729 protein C18orf32 homolog (87 aa).

Belongs to the UPF0729 family.

This chain is UPF0729 protein C18orf32 homolog, found in Esox lucius (Northern pike).